A 457-amino-acid polypeptide reads, in one-letter code: Serine--tRNA ligase (457 aa).

252–254 contributes to the L-serine binding site; that stretch reads TAE. ATP is bound by residues 283 to 285 and V299; that span reads RKE. Residue E306 coordinates L-serine. 370–373 provides a ligand contact to ATP; the sequence is EMVS. T406 provides a ligand contact to L-serine.

Belongs to the class-II aminoacyl-tRNA synthetase family. Type-1 seryl-tRNA synthetase subfamily. In terms of assembly, homodimer. The tRNA molecule binds across the dimer.

It localises to the cytoplasm. The catalysed reaction is tRNA(Ser) + L-serine + ATP = L-seryl-tRNA(Ser) + AMP + diphosphate + H(+). It carries out the reaction tRNA(Sec) + L-serine + ATP = L-seryl-tRNA(Sec) + AMP + diphosphate + H(+). It functions in the pathway aminoacyl-tRNA biosynthesis; selenocysteinyl-tRNA(Sec) biosynthesis; L-seryl-tRNA(Sec) from L-serine and tRNA(Sec): step 1/1. Functionally, catalyzes the attachment of serine to tRNA(Ser). Is also able to aminoacylate tRNA(Sec) with serine, to form the misacylated tRNA L-seryl-tRNA(Sec), which will be further converted into selenocysteinyl-tRNA(Sec). The sequence is that of Serine--tRNA ligase from Saccharolobus islandicus (strain M.14.25 / Kamchatka #1) (Sulfolobus islandicus).